The following is a 334-amino-acid chain: Spermidine synthase 1 (334 aa).

The segment at 1 to 37 is disordered; sequence MAAPENTLHSTDSPLKRQREDEVNGVSDTLSKEPQPN. The segment covering 26–37 has biased composition (polar residues); sequence VSDTLSKEPQPN. The 238-residue stretch at 44–281 folds into the PABS domain; sequence PGWFSEISPM…GMIGFMLCST (238 aa). Glutamine 75 provides a ligand contact to S-adenosyl 3-(methylsulfanyl)propylamine. Tyrosine 105 contacts putrescine. S-adenosyl 3-(methylsulfanyl)propylamine contacts are provided by residues glutamine 106, aspartate 130, glutamate 150, 181–182, and aspartate 200; that span reads DG. The active-site Proton acceptor is the aspartate 200. Putrescine-binding positions include 200–203 and tyrosine 269; that span reads DSSD.

The protein belongs to the spermidine/spermine synthase family.

The catalysed reaction is S-adenosyl 3-(methylsulfanyl)propylamine + putrescine = S-methyl-5'-thioadenosine + spermidine + H(+). It participates in amine and polyamine biosynthesis; spermidine biosynthesis; spermidine from putrescine: step 1/1. The protein is Spermidine synthase 1 (SPDSYN1) of Pisum sativum (Garden pea).